The following is a 96-amino-acid chain: DNA-binding protein Saci_1468 (96 aa).

Belongs to the PDCD5 family.

The polypeptide is DNA-binding protein Saci_1468 (Sulfolobus acidocaldarius (strain ATCC 33909 / DSM 639 / JCM 8929 / NBRC 15157 / NCIMB 11770)).